The primary structure comprises 31 residues: Monocyclic monoterpene ketone monooxygenase (31 aa).

FAD is bound at residue 20–25; it reads GAGFXG.

Monomer. Requires FAD as cofactor.

It carries out the reaction 1-hydroxylimonen-2-one + NADPH + O2 = 3-isopropenyl-6-oxoheptanoate + NADP(+) + H2O. It catalyses the reaction (1R,4S)-1-hydroxylimonen-2-one + NADPH + O2 + H(+) = (4S,7S)-7-hydroxy-4-isopropenyl-7-methyloxepan-2-one + NADP(+) + H2O. The enzyme catalyses (1S,4R)-1-hydroxylimonen-2-one + NADPH + O2 + H(+) = (4R,7R)-7-hydroxy-4-isopropenyl-7-methyloxepan-2-one + NADP(+) + H2O. The catalysed reaction is (1R,4R)-dihydrocarvone + NADPH + O2 + H(+) = (4R,7R)-4-isopropenyl-7-methyloxepan-2-one + NADP(+) + H2O. It carries out the reaction (1S,4R)-menthone + NADPH + O2 + H(+) = (4S,7R)-7-isopropyl-4-methyloxepan-2-one + NADP(+) + H2O. It catalyses the reaction (1R,4S)-menthone + NADPH + O2 + H(+) = (4R,7S)-7-isopropyl-4-methyloxepan-2-one + NADP(+) + H2O. The enzyme catalyses (1S,4R)-isodihydrocarvone + NADPH + O2 + H(+) = (3S,6R)-6-isopropenyl-3-methyloxepan-2-one + NADP(+) + H2O. The protein operates within terpene metabolism; monoterpene degradation. In terms of biological role, catalyzes the NADPH- and oxygen-dependent oxidation of the monocyclic monoterpene ketones 1-hydroxy-2-oxolimonene, dihydrocarvone and menthone. Is able to convert all enantiomers of these natural substrates with almost equal efficiency. Is thus involved in the conversion of the monocyclic monoterpene ketone intermediates formed in the degradation pathways of all stereoisomers of three different monocyclic monoterpenes, i.e. limonene, (dihydro)carveol and menthol, which likely make R.erythropolis able to grow on these compounds as the sole source of carbon and energy. The polypeptide is Monocyclic monoterpene ketone monooxygenase (Rhodococcus erythropolis (Arthrobacter picolinophilus)).